The sequence spans 424 residues: Zona pellucida sperm-binding protein 3 (424 aa).

A signal peptide spans 1–22 (MGLSYGLFICFLLWAGTGLCYP). The Extracellular portion of the chain corresponds to 23–383 (PTTTEDKTHP…VEGSTSPHTS (361 aa)). The ZP domain maps to 43–305 (ECRHAWLVVN…KACSFIKSSN (263 aa)). 2 disulfide bridges follow: Cys-44/Cys-138 and Cys-76/Cys-97. A glycan (N-linked (GlcNAc...) asparagine) is linked at Asn-52. Residues Asn-123 and Asn-145 are each glycosylated (N-linked (GlcNAc...) asparagine). Residues Thr-154, Thr-160, and Thr-161 are each glycosylated (O-linked (GalNAc...) threonine). 2 disulfides stabilise this stretch: Cys-215/Cys-280 and Cys-237/Cys-298. Residues 349–424 (RRHVTEEADI…PMICPVSASQ (76 aa)) constitute a propeptide, removed in mature form. The chain crosses the membrane as a helical span at residues 384–404 (VMVGIGLATVLSLTLATIVLG). The Cytoplasmic portion of the chain corresponds to 405 to 424 (LARRHHTASRPMICPVSASQ).

This sequence belongs to the ZP domain family. ZPC subfamily. In terms of assembly, polymers of ZP2 and ZP3 organized into long filaments cross-linked by ZP1 homodimers. Interacts with ZP1 and ZP2. In terms of processing, proteolytically cleaved before the transmembrane segment to yield the secreted ectodomain incorporated in the zona pellucida. Post-translationally, N-glycosylated. O-glycosylated; removal of O-linked glycans may play an important role in the post-fertilization block to polyspermy. As to expression, expressed in oocytes.

It localises to the zona pellucida. The protein resides in the cell membrane. In terms of biological role, component of the zona pellucida, an extracellular matrix surrounding oocytes which mediates sperm binding, induction of the acrosome reaction and prevents post-fertilization polyspermy. The zona pellucida is composed of 3 to 4 glycoproteins, ZP1, ZP2, ZP3, and ZP4. ZP3 is essential for sperm binding and zona matrix formation. In Felis catus (Cat), this protein is Zona pellucida sperm-binding protein 3 (ZP3).